The sequence spans 480 residues: Probable cyclodipeptide synthase PUL1 (480 aa).

It functions in the pathway siderophore biosynthesis. Probable cyclodipeptide synthase; part of the PUL gene cluster that mediates the formation of pulcherrimin, a red iron-containing pigment composed of two cyclized and modified leucine molecules that acts as a siderophore, a chelator that binds iron outside the cell for subsequent uptake. Two leucine molecules are cyclized via a cyclodipeptide synthase, and the resulting diketopiperazine is oxidized by a cytochrome P450 monooxygenase to generate pulcherriminic acid (PA), which can then spontaneously bind iron to form pulcherrimin. The probable cyclodipeptide synthase PUL1 and the cytochrome P450 monooxygenase PUL2 encode the enzymes responsible for the two-step pulcherrimin biosynthesis pathway. The chain is Probable cyclodipeptide synthase PUL1 from Kluyveromyces lactis (strain ATCC 8585 / CBS 2359 / DSM 70799 / NBRC 1267 / NRRL Y-1140 / WM37) (Yeast).